Here is a 225-residue protein sequence, read N- to C-terminus: Lipoarabinomannan carrier protein LprG (225 aa).

A signal peptide spans 1–21; sequence MRNRIRLALIPVAVAAIALAG. Residue cysteine 22 is the site of N-palmitoyl cysteine attachment. The S-diacylglycerol cysteine moiety is linked to residue cysteine 22.

The protein belongs to the LppX/LprAFG lipoprotein family. In terms of processing, modified by Lgt on Cys-22 with an S-linked diacylglyceral, signal peptide is removed by LspA, Cys-22 is further modifed with a fatty acid on its amino group by Lnt yielding a triacylated protein.

The protein resides in the cell inner membrane. In terms of biological role, helps membrane protein MAB_2807 (P55) transport triacylglycerides (TAG) across the inner cell membrane into the periplasm and probably ultimately to the outer membrane. Binds TAG in its hydrophobic cavity and transfers it between lipid bilayers. TAG probably regulates lipid metabolism and growth regulation and plays a structural role in the outer membrane. Also binds mannosides, lipoarabinomannan and lipomannan and various glycolipids in the same cavity. The sequence is that of Lipoarabinomannan carrier protein LprG from Mycobacteroides abscessus (strain ATCC 19977 / DSM 44196 / CCUG 20993 / CIP 104536 / JCM 13569 / NCTC 13031 / TMC 1543 / L948) (Mycobacterium abscessus).